The following is a 227-amino-acid chain: Uracil-DNA glycosylase (227 aa).

D64 serves as the catalytic Proton acceptor.

The protein belongs to the uracil-DNA glycosylase (UDG) superfamily. UNG family.

The protein resides in the cytoplasm. It carries out the reaction Hydrolyzes single-stranded DNA or mismatched double-stranded DNA and polynucleotides, releasing free uracil.. Its function is as follows. Excises uracil residues from the DNA which can arise as a result of misincorporation of dUMP residues by DNA polymerase or due to deamination of cytosine. The chain is Uracil-DNA glycosylase from Alkaliphilus metalliredigens (strain QYMF).